The primary structure comprises 292 residues: Poly(U)-specific endoribonuclease-A (292 aa).

In terms of domain architecture, EndoU spans 8-285 (LNHELSKLFN…IGTAYPVLLS (278 aa)). Residues H162, H178, and K224 contribute to the active site.

Belongs to the ENDOU family. As to quaternary structure, monomer. Mn(2+) is required as a cofactor.

The protein resides in the nucleus. It carries out the reaction uridylyl-uridylyl-ribonucleotide-RNA = a 3'-end uridylyl-2',3'-cyclophospho-uridine-RNA + a 5'-end dephospho-ribonucleoside-RNA. Functionally, poly(U)-specific endoribonuclease involved in the processing of intron-encoded box C/D snoRNAs, such as U16 and U86. Releases products that have 2',3'-cyclic phosphate termini at the 3'-end. This is Poly(U)-specific endoribonuclease-A (endou-a) from Xenopus laevis (African clawed frog).